We begin with the raw amino-acid sequence, 607 residues long: MSEFDHVQFLKTLSSEPGVYCMLDSDNQVIYVGKAKHLKKRVSSYFRSNITDSKTRVLVSNICNVEVTLTNTETEALLLENNLIKKYQPRYNILLRDDKSYPYILLTNHKHPRLAFHRGSRKVKGEYFGPFPSAGAVSESLRLMQKIFPIRQCEDVYYRARSRPCLQYQLKRCSAPCVNKVSDEDYTEQVDYVRKFLTGKSHEVIADLIKKMEAASQQLNFELAAKVRDQIMLLRKMQEQQSISGNFAEMDVVGFAHLNGLNGIHLLMIRDHKVLGSKTYFPKVPKDSSEQEILTSFLGQYYLAPGATGRIAKEIILPFEIQESDVLGQALTQISERKVTLKVVTRGERAQYLQLANKNALNSITVKQSTQDSINKRYAQLKATLRLDDITRMECFDISHTMGENTVASCVVFDSQGPNTKEYRRYNVTGITGGDDYAAMEFALNKRYNKLVDEDKIPDVIFIDGGKGQLGRAEQYFATWPHAKMPLLVGVAKGTSRKPGLETLLIDGGRKTIPMDSDAPALHLIQHIRDESHRFAIAGHRNKRQKQRTQSLLEEINGVGAKRRQTLLKYLGGMQGVKAANIEQLKKVPGISPDMADKIFNHLHDKG.

The 79-residue stretch at 15-93 (SEPGVYCMLD…IKKYQPRYNI (79 aa)) folds into the GIY-YIG domain. The region spanning 202 to 237 (HEVIADLIKKMEAASQQLNFELAAKVRDQIMLLRKM) is the UVR domain.

It belongs to the UvrC family. As to quaternary structure, interacts with UvrB in an incision complex.

It localises to the cytoplasm. The UvrABC repair system catalyzes the recognition and processing of DNA lesions. UvrC both incises the 5' and 3' sides of the lesion. The N-terminal half is responsible for the 3' incision and the C-terminal half is responsible for the 5' incision. The protein is UvrABC system protein C of Pseudoalteromonas translucida (strain TAC 125).